The sequence spans 513 residues: ATP synthase subunit alpha (513 aa).

Gly169–Thr176 is an ATP binding site.

It belongs to the ATPase alpha/beta chains family. F-type ATPases have 2 components, CF(1) - the catalytic core - and CF(0) - the membrane proton channel. CF(1) has five subunits: alpha(3), beta(3), gamma(1), delta(1), epsilon(1). CF(0) has three main subunits: a(1), b(2) and c(9-12). The alpha and beta chains form an alternating ring which encloses part of the gamma chain. CF(1) is attached to CF(0) by a central stalk formed by the gamma and epsilon chains, while a peripheral stalk is formed by the delta and b chains.

Its subcellular location is the cell inner membrane. It catalyses the reaction ATP + H2O + 4 H(+)(in) = ADP + phosphate + 5 H(+)(out). In terms of biological role, produces ATP from ADP in the presence of a proton gradient across the membrane. The alpha chain is a regulatory subunit. The polypeptide is ATP synthase subunit alpha (Burkholderia orbicola (strain AU 1054)).